A 100-amino-acid chain; its full sequence is NADH-quinone oxidoreductase subunit K (100 aa).

3 consecutive transmembrane segments (helical) span residues 3 to 23, 29 to 49, and 60 to 80; these read LNAYLVLAAMLFTIGVFGIFL, ISIMMSIELMLLAVNINFVAF, and IFTFFVVTVAAAEAAIGLAIL.

It belongs to the complex I subunit 4L family. NDH-1 is composed of 14 different subunits. Subunits NuoA, H, J, K, L, M, N constitute the membrane sector of the complex.

Its subcellular location is the cell inner membrane. It catalyses the reaction a quinone + NADH + 5 H(+)(in) = a quinol + NAD(+) + 4 H(+)(out). NDH-1 shuttles electrons from NADH, via FMN and iron-sulfur (Fe-S) centers, to quinones in the respiratory chain. The immediate electron acceptor for the enzyme in this species is believed to be ubiquinone. Couples the redox reaction to proton translocation (for every two electrons transferred, four hydrogen ions are translocated across the cytoplasmic membrane), and thus conserves the redox energy in a proton gradient. This chain is NADH-quinone oxidoreductase subunit K, found in Magnetococcus marinus (strain ATCC BAA-1437 / JCM 17883 / MC-1).